A 233-amino-acid chain; its full sequence is Protein-methionine-sulfoxide reductase heme-binding subunit MsrQ (233 aa).

Helical transmembrane passes span 13–33 (IKAA…HGLW), 44–64 (ALTR…LCVS), 81–101 (MLGL…LWLD), 117–137 (PFIT…LTSS), 151–171 (SLHR…LWLV), and 174–194 (VALL…GWRV). Residues 50 to 164 (GIWTLNFLFL…AVYAVAILGV (115 aa)) form the Ferric oxidoreductase domain.

Belongs to the MsrQ family. In terms of assembly, heterodimer of a catalytic subunit (MsrP) and a heme-binding subunit (MsrQ).

It is found in the cell inner membrane. Its function is as follows. Part of the MsrPQ system that repairs oxidized periplasmic proteins containing methionine sulfoxide residues (Met-O), using respiratory chain electrons. Thus protects these proteins from oxidative-stress damage caused by reactive species of oxygen and chlorine generated by the host defense mechanisms. MsrPQ is essential for the maintenance of envelope integrity under bleach stress, rescuing a wide series of structurally unrelated periplasmic proteins from methionine oxidation. MsrQ provides electrons for reduction to the reductase catalytic subunit MsrP, using the quinone pool of the respiratory chain. Probably involved in protection against reactive chlorine species (RCS) generated by chlorite and hypochlorite. The sequence is that of Protein-methionine-sulfoxide reductase heme-binding subunit MsrQ from Azospira oryzae (strain ATCC BAA-33 / DSM 13638 / PS) (Dechlorosoma suillum).